A 596-amino-acid polypeptide reads, in one-letter code: Pentatricopeptide repeat-containing protein At1g80270, mitochondrial (596 aa).

Residues 1–69 (MFALSKVLRR…RALSSSAGTK (69 aa)) constitute a mitochondrion transit peptide. The interval 62–119 (LSSSAGTKSDQEEDDLEDGFSELEGSKSGQGSTSSDEDEGKLSADEEEEEELDLIETD) is disordered. Composition is skewed to acidic residues over residues 72 to 82 (QEEDDLEDGFS) and 96 to 117 (SDEDEGKLSADEEEEEELDLIE). PPR repeat units lie at residues 228–262 (GEVLYRTLLANCVAAGNVKKSELVFNKMKDLGFPL), 263–296 (SGFTCDQMLLLHKRIDRKKIADVLLLMEKENIKP), 297–331 (SLLTYKILIDVKGATNDISGMEQILETMKDEGVEL), 332–366 (DFQTQALTARHYSGAGLKDKAEKVLKEMEGESLEA), 367–397 (NRRAFKDLLSIYASLGREDEVKRIWKICESK), 399–433 (YFEESLAAIQAFGKLNKVQEAEAIFEKIVKMDRRA), 434–468 (SSSTYSVLLRVYVDHKMLSKGKDLVKRMAESGCRI), 469–503 (EATTWDALIKLYVEAGEVEKADSLLDKASKQSHTK), and 505–539 (MMNSFMYIMDEYSKRGDVHNTEKIFLKMREAGYTS).

The protein belongs to the PPR family. P subfamily.

It is found in the mitochondrion. The sequence is that of Pentatricopeptide repeat-containing protein At1g80270, mitochondrial from Arabidopsis thaliana (Mouse-ear cress).